A 189-amino-acid polypeptide reads, in one-letter code: MAQLYYKYGTMNSGKTIEILKVAHNYEEQGKPVVIMTSALDTRDGFGIVSSRIGMRREAIPISNDMDIFTFIAQLEEKPYCVLIDESQFLSKQNVYDLARVVDELNVPVMAFGLKNDFQNNLFEGSKHLLLLADKIDEIKTICQYCSKKATMVLRTENGKPVYEGDQIQIGGNETYIPVCRKHYFNPEI.

Residues 9 to 16 (GTMNSGKT) and 85 to 88 (DESQ) contribute to the ATP site. E86 (proton acceptor) is an active-site residue. Zn(2+) contacts are provided by C143, C146, C180, and H183.

This sequence belongs to the thymidine kinase family. As to quaternary structure, homotetramer.

It localises to the cytoplasm. It catalyses the reaction thymidine + ATP = dTMP + ADP + H(+). This Streptococcus pyogenes serotype M18 (strain MGAS8232) protein is Thymidine kinase.